Consider the following 423-residue polypeptide: Gamma-glutamyl phosphate reductase (423 aa).

It belongs to the gamma-glutamyl phosphate reductase family.

It is found in the cytoplasm. The catalysed reaction is L-glutamate 5-semialdehyde + phosphate + NADP(+) = L-glutamyl 5-phosphate + NADPH + H(+). Its pathway is amino-acid biosynthesis; L-proline biosynthesis; L-glutamate 5-semialdehyde from L-glutamate: step 2/2. Functionally, catalyzes the NADPH-dependent reduction of L-glutamate 5-phosphate into L-glutamate 5-semialdehyde and phosphate. The product spontaneously undergoes cyclization to form 1-pyrroline-5-carboxylate. The protein is Gamma-glutamyl phosphate reductase of Roseiflexus castenholzii (strain DSM 13941 / HLO8).